We begin with the raw amino-acid sequence, 327 residues long: Fructose-1,6-bisphosphatase class 1 (327 aa).

Positions 84, 103, 105, and 106 each coordinate Mg(2+). Substrate is bound by residues Asp106–Ser109, Asn198, and Lys264. Glu270 provides a ligand contact to Mg(2+).

The protein belongs to the FBPase class 1 family. In terms of assembly, homotetramer. Requires Mg(2+) as cofactor.

It localises to the cytoplasm. The catalysed reaction is beta-D-fructose 1,6-bisphosphate + H2O = beta-D-fructose 6-phosphate + phosphate. It participates in carbohydrate biosynthesis; gluconeogenesis. The polypeptide is Fructose-1,6-bisphosphatase class 1 (Psychrobacter cryohalolentis (strain ATCC BAA-1226 / DSM 17306 / VKM B-2378 / K5)).